We begin with the raw amino-acid sequence, 549 residues long: Cytochrome bc1 complex cytochrome b subunit (549 aa).

Residues Phe45 to Leu65 traverse the membrane as a helical segment. 2 residues coordinate heme: His114 and His128. Transmembrane regions (helical) follow at residues Ala118 to Phe138, Trp146 to Leu166, and Val189 to Ile209. Heme is bound by residues His216 and His231. A run of 5 helical transmembrane segments spans residues Ile217–Phe237, Ser266–Ile286, Pro335–Leu355, Ile381–Ile401, and Ile418–Leu438.

Belongs to the cytochrome b family. The cytochrome bc1 complex is composed of a cytochrome b (QcrB), the Rieske iron-sulfur protein (QcrA) and a diheme cytochrome c (QcrC) subunit. Requires heme as cofactor.

Its subcellular location is the cell membrane. The catalysed reaction is a quinol + 2 Fe(III)-[cytochrome c](out) = a quinone + 2 Fe(II)-[cytochrome c](out) + 2 H(+)(out). Its function is as follows. Cytochrome b subunit of the cytochrome bc1 complex, an essential component of the respiratory electron transport chain required for ATP synthesis. The bc1 complex catalyzes the oxidation of ubiquinol and the reduction of cytochrome c in the respiratory chain. The bc1 complex operates through a Q-cycle mechanism that couples electron transfer to generation of the proton gradient that drives ATP synthesis. The cytochrome b subunit contains two ubiquinol reactive sites: the oxidation (QP) site and the reduction (QN) site. The chain is Cytochrome bc1 complex cytochrome b subunit (qcrB) from Mycobacterium bovis (strain ATCC BAA-935 / AF2122/97).